Consider the following 614-residue polypeptide: Putative ABC transporter ATP-binding protein MA_1747 (614 aa).

ABC transporter domains are found at residues 11–251 (VRLE…KLGI) and 319–552 (VLIE…AGLL). Residues 45 to 52 (GPSGCGKS) and 352 to 359 (GHNGAGKT) contribute to the ATP site.

The protein belongs to the ABC transporter superfamily.

It is found in the cell membrane. Probably part of an ABC transporter complex. Responsible for energy coupling to the transport system. This Methanosarcina acetivorans (strain ATCC 35395 / DSM 2834 / JCM 12185 / C2A) protein is Putative ABC transporter ATP-binding protein MA_1747.